The following is a 146-amino-acid chain: MRGSELSLLLLALVLCQAPRGPAAPVSTGAGGGTVLAKMYPRGSHWAVGHLMGKKSTDESPSLYAADRDGLKEQLRGYVRWEEAARDLLDLLEAAGNQSHQPPQHPPLSLQPTWDPEDGSYFNDVQTAKLVDSLLQVLKEKGGTAS.

The signal sequence occupies residues 1–23; that stretch reads MRGSELSLLLLALVLCQAPRGPA. At Met-52 the chain carries Methionine amide. A propeptide spanning residues 56 to 146 is cleaved from the precursor; sequence STDESPSLYA…VLKEKGGTAS (91 aa). A compositionally biased stretch (low complexity) spans 94–112; the sequence is AAGNQSHQPPQHPPLSLQP. Residues 94–121 form a disordered region; that stretch reads AAGNQSHQPPQHPPLSLQPTWDPEDGSY.

The protein belongs to the bombesin/neuromedin-B/ranatensin family. Detected in peptidergic dorsal root ganglion neurons (at protein level). Expressed in several dozen neurons throughout the dorsal retrotrapezoid nucleus/parafacial respiratory group (RTN/pFRG) as well as in scattered cells in the nucleus tractus solitarius and parabrachial nucleus (at protein level). Within the RTN/pFRG, expressed in neuronal subpopulations distinct from those expressing Nmb (at protein level). Expressed in L6 corticothalamic neurons (at protein level). Strongly expressed in several input areas of the auditory cortex including the lateral amygdala, contralateral auditory cortex, temporal association area, perirhinal cortex and auditory thalamic nuclei (at protein level). Detected in the suprachiasmatic nucleus in the hypothalamus. Detected in a subset of glutamatergic cells in the cortex. Highly expressed both in the lateral nucleus of the amygdala, and in regions sending synaptic projections to the lateral nucleus.

Its subcellular location is the secreted. The protein localises to the cytoplasmic vesicle. It is found in the secretory vesicle lumen. The protein resides in the cell projection. It localises to the neuron projection. Its function is as follows. Stimulates the release of gastrin and other gastrointestinal hormones. Contributes to the perception of prurient stimuli and to the transmission of itch signals in the spinal cord that promote scratching behavior. Contributes primarily to nonhistaminergic itch sensation. In one study, shown to act in the amygdala as part of an inhibitory network which inhibits memory specifically related to learned fear. In another study, shown to act on vasoactive intestinal peptide (VIP)-expressing cells in the auditory cortex, most likely via extrasynaptic diffusion from local and long-range sources, to mediate disinhibition of glutamatergic cells via VIP cell-specific GRPR signaling which leads to enhanced auditory fear memories. Contributes to the regulation of food intake. Inhibits voltage-gated sodium channels but enhances voltage-gated potassium channels in hippocampal neurons. Contributes to the induction of sighing by acting directly on the pre-Botzinger complex, a cluster of several thousand neurons in the ventrolateral medulla responsible for inspiration during respiratory activity. Induces an itch response through activation of receptors present on mast cells, triggering mast cell degranulation. This is Gastrin-releasing peptide (Grp) from Mus musculus (Mouse).